Consider the following 424-residue polypeptide: Probable ribonuclease FAU-1 (424 aa).

It belongs to the FAU-1 family.

Functionally, probable RNase involved in rRNA stability through maturation and/or degradation of precursor rRNAs. Binds to RNA in loop regions with AU-rich sequences. This is Probable ribonuclease FAU-1 from Saccharolobus islandicus (strain Y.G.57.14 / Yellowstone #1) (Sulfolobus islandicus).